A 1401-amino-acid chain; its full sequence is MAP kinase kinase kinase wis4 (1401 aa).

Disordered stretches follow at residues 67–99 (HIPLTPSHSGQSEKLMSTRTSHSPYISPTMSYT) and 176–205 (QDSISDKSLPSTNQSLHHSEEDTESDNDFS). 2 stretches are compositionally biased toward polar residues: residues 72-99 (PSHSGQSEKLMSTRTSHSPYISPTMSYT) and 176-191 (QDSISDKSLPSTNQSL). Residues 1037 to 1306 (WQQGHFVRSG…AVDLLTHPWI (270 aa)) enclose the Protein kinase domain. Residues 1043–1051 (VRSGMFGDV) and Lys-1066 contribute to the ATP site. Asp-1161 functions as the Proton acceptor in the catalytic mechanism.

Belongs to the protein kinase superfamily. STE Ser/Thr protein kinase family. MAP kinase kinase kinase subfamily.

It catalyses the reaction L-seryl-[protein] + ATP = O-phospho-L-seryl-[protein] + ADP + H(+). It carries out the reaction L-threonyl-[protein] + ATP = O-phospho-L-threonyl-[protein] + ADP + H(+). Its function is as follows. Involved in a signal transduction pathway that is activated in under conditions of heat shock, oxidative stress or limited nutrition. Unlike win1, it is not activated by changes in the osmolarity of the extracellular environment. Activates the wis1 MAP kinase kinase by phosphorylation. The protein is MAP kinase kinase kinase wis4 (wis4) of Schizosaccharomyces pombe (strain 972 / ATCC 24843) (Fission yeast).